The chain runs to 87 residues: Small ribosomal subunit protein bS20 (87 aa).

Residues 1-22 (MANSAQARKRARQSVKQRAHNA) are disordered. The segment covering 7–19 (ARKRARQSVKQRA) has biased composition (basic residues).

Belongs to the bacterial ribosomal protein bS20 family.

Functionally, binds directly to 16S ribosomal RNA. The chain is Small ribosomal subunit protein bS20 from Neisseria gonorrhoeae (strain ATCC 700825 / FA 1090).